The following is a 202-amino-acid chain: Small ribosomal subunit protein uS4c (202 aa).

The S4 RNA-binding domain occupies 90–154; it reads MRLDNIIFRL…SQSIITKNLN (65 aa).

The protein belongs to the universal ribosomal protein uS4 family. Part of the 30S ribosomal subunit. Contacts protein S5. The interaction surface between S4 and S5 is involved in control of translational fidelity.

It localises to the plastid. The protein resides in the chloroplast. One of the primary rRNA binding proteins, it binds directly to 16S rRNA where it nucleates assembly of the body of the 30S subunit. Functionally, with S5 and S12 plays an important role in translational accuracy. The protein is Small ribosomal subunit protein uS4c (rps4) of Ricciocarpos natans (Liverwort).